A 239-amino-acid polypeptide reads, in one-letter code: tRNA1(Val) (adenine(37)-N6)-methyltransferase (239 aa).

It belongs to the methyltransferase superfamily. tRNA (adenine-N(6)-)-methyltransferase family.

The protein localises to the cytoplasm. The catalysed reaction is adenosine(37) in tRNA1(Val) + S-adenosyl-L-methionine = N(6)-methyladenosine(37) in tRNA1(Val) + S-adenosyl-L-homocysteine + H(+). In terms of biological role, specifically methylates the adenine in position 37 of tRNA(1)(Val) (anticodon cmo5UAC). In Vibrio vulnificus (strain CMCP6), this protein is tRNA1(Val) (adenine(37)-N6)-methyltransferase.